We begin with the raw amino-acid sequence, 51 residues long: Large ribosomal subunit protein eL39 (51 aa).

This sequence belongs to the eukaryotic ribosomal protein eL39 family.

The polypeptide is Large ribosomal subunit protein eL39 (Methanococcoides burtonii (strain DSM 6242 / NBRC 107633 / OCM 468 / ACE-M)).